Consider the following 584-residue polypeptide: Mitochondrial sodium/calcium exchanger protein (584 aa).

The N-terminal stretch at 1–26 (MAGRRLNLRWALSVLCVLLMAETVSG) is a signal peptide. Residues 27–95 (TRGSSTGAHI…GIFCHFPPSL (69 aa)) are Extracellular-facing. N-linked (GlcNAc...) asparagine glycosylation occurs at N60. A helical membrane pass occupies residues 96–116 (LPLAVTLYVSWLLYLFLILGV). The Cytoplasmic portion of the chain corresponds to 117 to 140 (TAAKFFCPNLSAISTTLKLSHNVA). Residues 141 to 161 (GVTFLAFGNGAPDIFSALVAF) form a helical membrane-spanning segment. The Extracellular segment spans residues 162-168 (SDPHTAG). The helical transmembrane segment at 169-189 (LALGALFGAGVLVTTVVAGGI) threads the bilayer. The Cytoplasmic portion of the chain corresponds to 190-200 (TILHPFMAASR). Residues 201-221 (PFFRDIVFYMVAVFLTFLMLF) form a helical membrane-spanning segment. Topologically, residues 222 to 226 (RGRVT) are extracellular. The helical transmembrane segment at 227 to 247 (LAWALGYLGLYVFYVVTVILC) threads the bilayer. Topologically, residues 248–325 (TWIYQRQRRG…KWRRKSAYWK (78 aa)) are cytoplasmic. S258 is modified (phosphoserine; by PKA). The chain crosses the membrane as a helical span at residues 326–346 (ALKVFKLPVEFLLLLTVPVVD). Residues 347–360 (PDKDDQNWKRPLNC) lie on the Extracellular side of the membrane. The helical transmembrane segment at 361–381 (LHLVISPLVVVLTLQSGTYGV) threads the bilayer. The Cytoplasmic portion of the chain corresponds to 382–383 (YE). Residues 384–404 (IGGLVPVWVVVVIAGTALASV) form a helical membrane-spanning segment. Residues 405 to 416 (TFFATSDSQPPR) lie on the Extracellular side of the membrane. A helical membrane pass occupies residues 417–437 (LHWLFAFLGFLTSALWINAAA). Topologically, residues 438–445 (TEVVNILR) are cytoplasmic. A helical transmembrane segment spans residues 446 to 466 (SLGVVFRLSNTVLGLTLLAWG). Residues 467–487 (NSIGDAFSDFTLARQGYPRMA) lie on the Extracellular side of the membrane. A helical transmembrane segment spans residues 488–508 (FSACFGGIIFNILVGVGLGCL). At 509 to 524 (LQISRSHTEVKLEPDG) the chain is on the cytoplasmic side. The chain crosses the membrane as a helical span at residues 525-545 (LLVWVLAGALGLSLVFSLVSV). The Extracellular segment spans residues 546 to 558 (PLQCFQLSRVYGF). The helical transmembrane segment at 559–579 (CLLLFYLNFLVVALLTEFGVI) threads the bilayer. Over 580–584 (HLKSM) the chain is Cytoplasmic.

The protein belongs to the Ca(2+):cation antiporter (CaCA) (TC 2.A.19) family. SLC24A subfamily. Phosphorylation at Ser-258 by PKA prevents calcium overload. As to expression, present in pancreatic beta-cells (at protein level).

It localises to the mitochondrion inner membrane. The enzyme catalyses Ca(2+)(in) + 3 Na(+)(out) = Ca(2+)(out) + 3 Na(+)(in). The catalysed reaction is 3 Li(+)(out) + Ca(2+)(in) = 3 Li(+)(in) + Ca(2+)(out). With respect to regulation, inhibited by the sodium/calcium exchanger inhibitor CGP-37157. Strongly inhibited by zinc. In terms of biological role, mitochondrial sodium/calcium antiporter that mediates sodium-dependent calcium efflux from mitochondrion, by mediating the exchange of 3 sodium ions per 1 calcium ion. Plays a central role in mitochondrial calcium homeostasis by mediating mitochondrial calcium extrusion: calcium efflux is essential for mitochondrial function and cell survival, notably in cardiomyocytes. Regulates rates of glucose-dependent insulin secretion in pancreatic beta-cells during the first phase of insulin secretion: acts by mediating efflux of calcium from mitochondrion, thereby affecting cytoplasmic calcium responses. Required for store-operated Ca(2+) entry (SOCE) and Ca(2+) release-activated Ca(2+) (CRAC) channel regulation: sodium transport by SLC8B1 leads to promote calcium-shuttling that modulates mitochondrial redox status, thereby regulating SOCE activity. Involved in B-lymphocyte chemotaxis. Able to transport Ca(2+) in exchange of either Li(+) or Na(+), explaining how Li(+) catalyzes Ca(2+) exchange. In contrast to other members of the family its function is independent of K(+). The polypeptide is Mitochondrial sodium/calcium exchanger protein (Homo sapiens (Human)).